The following is a 278-amino-acid chain: Aliphatic sulfonates import ATP-binding protein SsuB (278 aa).

The ABC transporter domain occupies 15-236; it reads LVLRDLSKRF…SQGDAAFAAL (222 aa). Residue 47–54 participates in ATP binding; the sequence is GRSGCGKS. Over residues 251–264 the composition is skewed to basic and acidic residues; sequence PERESFTHPNDGEP. Positions 251-278 are disordered; sequence PERESFTHPNDGEPRWPGVPAHGVRWAV.

Belongs to the ABC transporter superfamily. Aliphatic sulfonates importer (TC 3.A.1.17.2) family. As to quaternary structure, the complex is composed of two ATP-binding proteins (SsuB), two transmembrane proteins (SsuC) and a solute-binding protein (SsuA).

The protein resides in the cell inner membrane. It catalyses the reaction ATP + H2O + aliphatic sulfonate-[sulfonate-binding protein]Side 1 = ADP + phosphate + aliphatic sulfonateSide 2 + [sulfonate-binding protein]Side 1.. In terms of biological role, part of the ABC transporter complex SsuABC involved in aliphatic sulfonates import. Responsible for energy coupling to the transport system. The protein is Aliphatic sulfonates import ATP-binding protein SsuB of Albidiferax ferrireducens (strain ATCC BAA-621 / DSM 15236 / T118) (Rhodoferax ferrireducens).